A 123-amino-acid chain; its full sequence is Ribosome-binding factor A (123 aa).

The protein belongs to the RbfA family. Monomer. Binds 30S ribosomal subunits, but not 50S ribosomal subunits or 70S ribosomes.

The protein resides in the cytoplasm. One of several proteins that assist in the late maturation steps of the functional core of the 30S ribosomal subunit. Associates with free 30S ribosomal subunits (but not with 30S subunits that are part of 70S ribosomes or polysomes). Required for efficient processing of 16S rRNA. May interact with the 5'-terminal helix region of 16S rRNA. The polypeptide is Ribosome-binding factor A (Neisseria gonorrhoeae (strain NCCP11945)).